The following is a 469-amino-acid chain: Squamosa promoter-binding-like protein 3 (469 aa).

The tract at residues 96–118 (SAEEHDKNMDKGKSKVDDTGTSR) is disordered. The segment covering 97-115 (AEEHDKNMDKGKSKVDDTG) has biased composition (basic and acidic residues). The SBP-type zinc-finger motif lies at 179–256 (NPHCQVEGCN…HDHNARRRKP (78 aa)). Residues Cys-182, Cys-187, Cys-204, His-207, Cys-223, Cys-226, His-230, and Cys-242 each contribute to the Zn(2+) site. A Bipartite nuclear localization signal motif is present at residues 239–255 (KRSCRRRLHDHNARRRK). The disordered stretch occupies residues 446–469 (NDDDEDHLQLPKPSYDNSHYDQMN). Polar residues predominate over residues 460–469 (YDNSHYDQMN).

Ubiquitous.

The protein localises to the nucleus. Trans-acting factor that binds specifically to the consensus nucleotide sequence 5'-TNCGTACAA-3'. May be involved in panicle development. The protein is Squamosa promoter-binding-like protein 3 (SPL3) of Oryza sativa subsp. indica (Rice).